The primary structure comprises 406 residues: Cysteine desulfurase IscS (406 aa).

Pyridoxal 5'-phosphate-binding positions include alanine 75–threonine 76, asparagine 155, glutamine 183, and serine 203–histidine 205. Residue lysine 206 is modified to N6-(pyridoxal phosphate)lysine. Residue threonine 243 coordinates pyridoxal 5'-phosphate. Cysteine 330 acts as the Cysteine persulfide intermediate in catalysis. Cysteine 330 is a binding site for [2Fe-2S] cluster.

This sequence belongs to the class-V pyridoxal-phosphate-dependent aminotransferase family. NifS/IscS subfamily. Homodimer. Forms a heterotetramer with IscU, interacts with other sulfur acceptors. Pyridoxal 5'-phosphate serves as cofactor.

The protein resides in the cytoplasm. The catalysed reaction is (sulfur carrier)-H + L-cysteine = (sulfur carrier)-SH + L-alanine. Its pathway is cofactor biosynthesis; iron-sulfur cluster biosynthesis. Functionally, master enzyme that delivers sulfur to a number of partners involved in Fe-S cluster assembly, tRNA modification or cofactor biosynthesis. Catalyzes the removal of elemental sulfur atoms from cysteine to produce alanine. Functions as a sulfur delivery protein for Fe-S cluster synthesis onto IscU, an Fe-S scaffold assembly protein, as well as other S acceptor proteins. This chain is Cysteine desulfurase IscS, found in Glaesserella parasuis serovar 5 (strain SH0165) (Haemophilus parasuis).